The following is a 357-amino-acid chain: UDP-N-acetylglucosamine--N-acetylmuramyl-(pentapeptide) pyrophosphoryl-undecaprenol N-acetylglucosamine transferase (357 aa).

UDP-N-acetyl-alpha-D-glucosamine is bound by residues 12–14, Asn-124, Arg-162, Ser-190, Ile-244, 263–268, and Gln-289; these read TGG and ALTVAE.

This sequence belongs to the glycosyltransferase 28 family. MurG subfamily.

It is found in the cell inner membrane. It catalyses the reaction di-trans,octa-cis-undecaprenyl diphospho-N-acetyl-alpha-D-muramoyl-L-alanyl-D-glutamyl-meso-2,6-diaminopimeloyl-D-alanyl-D-alanine + UDP-N-acetyl-alpha-D-glucosamine = di-trans,octa-cis-undecaprenyl diphospho-[N-acetyl-alpha-D-glucosaminyl-(1-&gt;4)]-N-acetyl-alpha-D-muramoyl-L-alanyl-D-glutamyl-meso-2,6-diaminopimeloyl-D-alanyl-D-alanine + UDP + H(+). The protein operates within cell wall biogenesis; peptidoglycan biosynthesis. Its function is as follows. Cell wall formation. Catalyzes the transfer of a GlcNAc subunit on undecaprenyl-pyrophosphoryl-MurNAc-pentapeptide (lipid intermediate I) to form undecaprenyl-pyrophosphoryl-MurNAc-(pentapeptide)GlcNAc (lipid intermediate II). This is UDP-N-acetylglucosamine--N-acetylmuramyl-(pentapeptide) pyrophosphoryl-undecaprenol N-acetylglucosamine transferase from Alkalilimnicola ehrlichii (strain ATCC BAA-1101 / DSM 17681 / MLHE-1).